The primary structure comprises 437 residues: Transcription factor E2F2 (437 aa).

The cyclin A/CDK2 binding stretch occupies residues 65 to 105 (ATPHGPEGQVVRCLPAGRLPAKRKLDLEGIGRPVVPEFPTP). A DNA-binding region spans residues 107–196 (GKCIRVDGLP…KNNIQWVGRG (90 aa)). The leucine-zipper stretch occupies residues 155 to 176 (LNWAAEVLDVQKRRIYDITNVL). The DEF box motif lies at 160–196 (EVLDVQKRRIYDITNVLEGIQLIRKKAKNNIQWVGRG). The segment at 197–289 (MFEDPTRPGK…PDRTEDNLQI (93 aa)) is dimerization. A disordered region spans residues 307–368 (VQEPDSPSEE…APPPPSLVPL (62 aa)). Residues 315 to 330 (EEPLPSTSTLCPSPDS) are compositionally biased toward low complexity. Over residues 351–365 (APAPTPQQAPPPPSL) the composition is skewed to pro residues. The tract at residues 359–437 (APPPPSLVPL…SYDLGDLLIN (79 aa)) is transactivation. Residues 410–427 (DDYLWGLEAGEGISDLFD) are retinoblastoma protein binding.

This sequence belongs to the E2F/DP family. As to quaternary structure, component of the DRTF1/E2F transcription factor complex. Forms heterodimers with DP family members. The E2F2 complex binds specifically hypophosphorylated retinoblastoma protein RB1. During the cell cycle, RB1 becomes phosphorylated in mid-to-late G1 phase, detaches from the DRTF1/E2F complex, rendering E2F transcriptionally active. Viral oncoproteins, notably E1A, T-antigen and HPV E7, are capable of sequestering RB1, thus releasing the active complex. Binds EAPP. Post-translationally, phosphorylated by CDK2 and cyclin A-CDK2 in the S-phase. Highest level of expression is found in placenta, low levels are found in lung. Found as well in many immortalized cell lines derived from tumor samples.

It is found in the nucleus. Functionally, transcription activator that binds DNA cooperatively with DP proteins through the E2 recognition site, 5'-TTTC[CG]CGC-3' found in the promoter region of a number of genes whose products are involved in cell cycle regulation or in DNA replication. The DRTF1/E2F complex functions in the control of cell-cycle progression from g1 to s phase. E2F2 binds specifically to RB1 in a cell-cycle dependent manner. The sequence is that of Transcription factor E2F2 (E2F2) from Homo sapiens (Human).